Consider the following 363-residue polypeptide: G-protein coupled receptor 78 (363 aa).

Topologically, residues 1-7 (MGPGEAL) are extracellular. A helical membrane pass occupies residues 8 to 28 (LAGLLVMVLAVALLSNALVLL). Topologically, residues 29-47 (CCAYSAELRTRASGVLLVN) are cytoplasmic. A helical membrane pass occupies residues 48–68 (LSLGHLLLAALDMPFTLLGVM). The Extracellular portion of the chain corresponds to 69-80 (RGRTPSAPGACQ). C79 and C156 form a disulfide bridge. The helical transmembrane segment at 81 to 101 (VIGFLDTFLASNAALSVAALS) threads the bilayer. Topologically, residues 102 to 122 (ADQWLAVGFPLRYAGRLRPRY) are cytoplasmic. Residues 123–143 (AGLLLGCAWGQSLAFSGAALG) traverse the membrane as a helical segment. The Extracellular segment spans residues 144 to 168 (CSWLGYSSAFASCSLRLPPEPERPR). Residues 169-189 (FAAFTATLHAVGFVLPLAVLC) traverse the membrane as a helical segment. Topologically, residues 190–242 (LTSLQVHRVARRHCQRMDTVTMKALALLADLHPSVRQRCLIQQKRRRHRATRK) are cytoplasmic. A helical transmembrane segment spans residues 243 to 263 (IGIAIATFLICFAPYVMTRLA). Residues 264–277 (ELVPFVTVNAQWGI) lie on the Extracellular side of the membrane. Residues 278-297 (LSKCLTYSKAVADPFTYSLL) form a helical membrane-spanning segment. At 298–363 (RRPFRQVLAG…ENDSCLQQTH (66 aa)) the chain is on the cytoplasmic side. Residues 340–363 (TPRPASTHNGSVDTENDSCLQQTH) are disordered. Over residues 343–363 (PASTHNGSVDTENDSCLQQTH) the composition is skewed to polar residues.

This sequence belongs to the G-protein coupled receptor 1 family. As to expression, high level of expression in placenta. Expressed throughout the brain at low level. No expression detected in skeletal muscle, lung, heart, liver, pancreas, or kidney.

The protein localises to the cell membrane. Functionally, orphan receptor. Displays a significant level of constitutive activity. Its effect is mediated by G(s)-alpha protein that stimulate adenylate cyclase, resulting in an elevation of intracellular cAMP. The polypeptide is G-protein coupled receptor 78 (GPR78) (Homo sapiens (Human)).